The primary structure comprises 157 residues: Ubiquitin-like protein 4A (157 aa).

Positions 1-76 constitute a Ubiquitin-like domain; that stretch reads MQLTVKALQG…LNLVVKPLEK (76 aa). Residue Lys48 forms a Glycyl lysine isopeptide (Lys-Gly) (interchain with G-Cter in ubiquitin) linkage. Ser90 is modified (phosphoserine). Positions 96-138 are required and sufficient for interaction with BAG6; that stretch reads WQLISKVLARHFSAADASRVLEQLQRDYQRSLSRLTLDDIERL.

As to quaternary structure, component of the BAG6/BAT3 complex, at least composed of BAG6, UBL4A and GET4/TRC35. Interacts with BAG6; the interaction is direct and required for UBL4A protein stability. Interacts with USP13; may be indirect via BAG6. Polyubiquitinated. Ubiquitination by AMFR and deubiquitination by USP13 may regulate the interaction between the BAG6/BAT complex and SGTA and therefore may regulate client proteins fate.

It is found in the cytoplasm. The protein resides in the cytosol. Its subcellular location is the nucleus. Functionally, as part of a cytosolic protein quality control complex, the BAG6/BAT3 complex, maintains misfolded and hydrophobic patches-containing proteins in a soluble state and participates in their proper delivery to the endoplasmic reticulum or alternatively can promote their sorting to the proteasome where they undergo degradation. The BAG6/BAT3 complex is involved in the post-translational delivery of tail-anchored/type II transmembrane proteins to the endoplasmic reticulum membrane. Recruited to ribosomes, it interacts with the transmembrane region of newly synthesized tail-anchored proteins and together with SGTA and ASNA1 mediates their delivery to the endoplasmic reticulum. Client proteins that cannot be properly delivered to the endoplasmic reticulum are ubiquitinated and sorted to the proteasome. Similarly, the BAG6/BAT3 complex also functions as a sorting platform for proteins of the secretory pathway that are mislocalized to the cytosol either delivering them to the proteasome for degradation or to the endoplasmic reticulum. The BAG6/BAT3 complex also plays a role in the endoplasmic reticulum-associated degradation (ERAD), a quality control mechanism that eliminates unwanted proteins of the endoplasmic reticulum through their retrotranslocation to the cytosol and their targeting to the proteasome. It maintains these retrotranslocated proteins in an unfolded yet soluble state condition in the cytosol to ensure their proper delivery to the proteasome. The chain is Ubiquitin-like protein 4A (UBL4A) from Plecturocebus moloch (Dusky titi monkey).